The following is a 129-amino-acid chain: NADH-quinone oxidoreductase subunit A (129 aa).

3 helical membrane-spanning segments follow: residues 14–34 (LAIH…VAAL), 67–87 (FLIA…FAWA), and 95–115 (WFGL…LVYL).

It belongs to the complex I subunit 3 family. As to quaternary structure, NDH-1 is composed of 14 different subunits. Subunits NuoA, H, J, K, L, M, N constitute the membrane sector of the complex.

The protein resides in the cell inner membrane. It carries out the reaction a quinone + NADH + 5 H(+)(in) = a quinol + NAD(+) + 4 H(+)(out). Its function is as follows. NDH-1 shuttles electrons from NADH, via FMN and iron-sulfur (Fe-S) centers, to quinones in the respiratory chain. The immediate electron acceptor for the enzyme in this species is believed to be ubiquinone. Couples the redox reaction to proton translocation (for every two electrons transferred, four hydrogen ions are translocated across the cytoplasmic membrane), and thus conserves the redox energy in a proton gradient. In Rhodopseudomonas palustris (strain HaA2), this protein is NADH-quinone oxidoreductase subunit A.